Consider the following 607-residue polypeptide: MPDEFNLKSFLADLPHLPGVYRHLDAAGEVMYVGKARDLKKRVSSYFQKTLASPRIAQMVSKVVRLEVTVTRSEAEALILENNLIKSLRPRYNILFRDDKSYPYLLITAHEWPRIAYYRGSTSKRGQYFGPYPNSWAVRETIQILQKVFRLRTCEDTVFANRSRPCLLYQIGRCSGPCVQAIDAEDYRRDVQRAARFLNGEAREVMDEIEARMQQASGELRFEEAAVLRDQMGSLSKVLHQQTMENVGGEDTDVIAVASAGGKVCVNLAMVRGGRHLGDKPFFPSHADGEEAAQVQEAFIAQHYADNVLPPVLVCSHALPDVDLIGLLSEQAGTRCRVLTRPQGVRRSWLEQAQKNAEMALARALTESGARAARTLSLAEALDLDTDEAALDALRIECFDISHTAGEATQASCVVFLHHDMQPSLYRRYNIVGITPGDDYAAMRQVLTRRFAKVTDGEAPMPGLVLIDGGKGQVEVARQVFVELGLDIGALVGVAKGEGRKVGLETLVFADARAPLALGKASAALMLIAQVRDEAHRFAITGMRAKRAKTRNVSRLEEIEGVGAKRRQRLLARFGGLSGVTSASIEDLASVDGISMDLAERIYDALH.

A GIY-YIG domain is found at 16 to 94 (HLPGVYRHLD…IKSLRPRYNI (79 aa)). Residues 203–238 (REVMDEIEARMQQASGELRFEEAAVLRDQMGSLSKV) enclose the UVR domain.

Belongs to the UvrC family. As to quaternary structure, interacts with UvrB in an incision complex.

Its subcellular location is the cytoplasm. In terms of biological role, the UvrABC repair system catalyzes the recognition and processing of DNA lesions. UvrC both incises the 5' and 3' sides of the lesion. The N-terminal half is responsible for the 3' incision and the C-terminal half is responsible for the 5' incision. The protein is UvrABC system protein C of Bordetella avium (strain 197N).